Consider the following 453-residue polypeptide: UDP-N-acetylmuramoylalanine--D-glutamate ligase (453 aa).

115 to 121 (GSNGKTT) provides a ligand contact to ATP.

This sequence belongs to the MurCDEF family.

It is found in the cytoplasm. The enzyme catalyses UDP-N-acetyl-alpha-D-muramoyl-L-alanine + D-glutamate + ATP = UDP-N-acetyl-alpha-D-muramoyl-L-alanyl-D-glutamate + ADP + phosphate + H(+). Its pathway is cell wall biogenesis; peptidoglycan biosynthesis. Its function is as follows. Cell wall formation. Catalyzes the addition of glutamate to the nucleotide precursor UDP-N-acetylmuramoyl-L-alanine (UMA). The sequence is that of UDP-N-acetylmuramoylalanine--D-glutamate ligase from Koribacter versatilis (strain Ellin345).